The primary structure comprises 153 residues: Cytochrome c-type biogenesis protein CcmE (153 aa).

Residues 1–8 (MTPVQRRR) lie on the Cytoplasmic side of the membrane. The helical; Signal-anchor for type II membrane protein transmembrane segment at 9-29 (LAWVLLALLASGLATALVAMA) threads the bilayer. Residues 30–153 (LERNIAYLYT…DVPVTAPEVR (124 aa)) lie on the Extracellular side of the membrane. Residues His-123 and Tyr-127 each coordinate heme.

The protein belongs to the CcmE/CycJ family.

The protein localises to the cell membrane. Its function is as follows. Heme chaperone required for the biogenesis of c-type cytochromes. Transiently binds heme delivered by CcmC and transfers the heme to apo-cytochromes in a process facilitated by CcmF and CcmH. In Stenotrophomonas maltophilia (strain K279a), this protein is Cytochrome c-type biogenesis protein CcmE.